Here is a 143-residue protein sequence, read N- to C-terminus: Histone H2AX (143 aa).

Residues 1–22 are disordered; sequence MSGRGKTGGKARAKAKSRSSRA. Serine 2 bears the N-acetylserine mark. Phosphoserine is present on serine 2. N6-acetyllysine is present on residues lysine 6 and lysine 10. A compositionally biased stretch (basic residues) spans 7 to 19; sequence TGGKARAKAKSRS. The residue at position 10 (lysine 10) is an N6-lactoyllysine; alternate. Residues lysine 14 and lysine 16 each participate in a glycyl lysine isopeptide (Lys-Gly) (interchain with G-Cter in ubiquitin) cross-link. Lysine 37 carries the N6-acetyllysine modification. Lysine 120 is covalently cross-linked (Glycyl lysine isopeptide (Lys-Gly) (interchain with G-Cter in ubiquitin)). The disordered stretch occupies residues 121–143; the sequence is TSATVGPKAPSGGKKATQASQEY. A Phosphoserine modification is found at serine 122. Glycyl lysine isopeptide (Lys-Gly) (interchain with G-Cter in SUMO2) cross-links involve residues lysine 128 and lysine 135. Serine 140 is modified (phosphoserine; by ATM, ATR and PRKDC). Positions 140-141 match the [ST]-Q motif motif; it reads SQ. A Phosphotyrosine; by WSTF modification is found at tyrosine 143.

Belongs to the histone H2A family. In terms of assembly, the nucleosome is a histone octamer containing two molecules each of H2A, H2B, H3 and H4 assembled in one H3-H4 heterotetramer and two H2A-H2B heterodimers. The octamer wraps approximately 147 bp of DNA. Interacts with numerous proteins required for DNA damage signaling and repair when phosphorylated on Ser-140. These include MDC1, TP53BP1, BRCA1 and the MRN complex, composed of MRE11, RAD50, and NBN. Interaction with the MRN complex is mediated at least in part by NBN. Also interacts with DHX9/NDHII when phosphorylated on Ser-140 and MCPH1 when phosphorylated at Ser-140 or Tyr-143. Interacts with ARRB2; the interaction is detected in the nucleus upon OR1D2 stimulation. Interacts with WRAP53/TCAB1. Interacts with HDGFL2. Interacts with DNA damage up-regulated protein DDUP. Forms a complex with DDUP and RAD18 following DDUP phosphorylation. (Microbial infection) Interacts with Epstein-Barr virus protein EBNA6. Post-translationally, phosphorylated by VRK1. Phosphorylated on Ser-140 (to form gamma-H2AX or H2AX139ph) in response to DNA double strand breaks (DSBs) generated by exogenous genotoxic agents and by stalled replication forks, and may also occur during meiotic recombination events and immunoglobulin class switching in lymphocytes. Phosphorylation can extend up to several thousand nucleosomes from the actual site of the DSB and may mark the surrounding chromatin for recruitment of proteins required for DNA damage signaling and repair. Widespread phosphorylation may also serve to amplify the damage signal or aid repair of persistent lesions. Phosphorylation of Ser-140 (H2AX139ph) in response to ionizing radiation is mediated by both ATM and PRKDC while defects in DNA replication induce Ser-140 phosphorylation (H2AX139ph) subsequent to activation of ATR and PRKDC. Dephosphorylation of Ser-140 by PP2A is required for DNA DSB repair. In meiosis, Ser-140 phosphorylation (H2AX139ph) may occur at synaptonemal complexes during leptotene as an ATM-dependent response to the formation of programmed DSBs by SPO11. Ser-140 phosphorylation (H2AX139ph) may subsequently occurs at unsynapsed regions of both autosomes and the XY bivalent during zygotene, downstream of ATR and BRCA1 activation. Ser-140 phosphorylation (H2AX139ph) may also be required for transcriptional repression of unsynapsed chromatin and meiotic sex chromosome inactivation (MSCI), whereby the X and Y chromosomes condense in pachytene to form the heterochromatic XY-body. During immunoglobulin class switch recombination in lymphocytes, Ser-140 phosphorylation (H2AX139ph) may occur at sites of DNA-recombination subsequent to activation of the activation-induced cytidine deaminase AICDA. Phosphorylation at Tyr-143 (H2AXY142ph) by BAZ1B/WSTF determines the relative recruitment of either DNA repair or pro-apoptotic factors. Phosphorylation at Tyr-143 (H2AXY142ph) favors the recruitment of APBB1/FE65 and pro-apoptosis factors such as MAPK8/JNK1, triggering apoptosis. In contrast, dephosphorylation of Tyr-143 by EYA proteins (EYA1, EYA2, EYA3 or EYA4) favors the recruitment of MDC1-containing DNA repair complexes to the tail of phosphorylated Ser-140 (H2AX139ph). Monoubiquitination of Lys-120 (H2AXK119ub) by RING1 and RNF2/RING2 complex gives a specific tag for epigenetic transcriptional repression. Following DNA double-strand breaks (DSBs), it is ubiquitinated through 'Lys-63' linkage of ubiquitin moieties by the E2 ligase UBE2N and the E3 ligases RNF8 and RNF168, leading to the recruitment of repair proteins to sites of DNA damage. Ubiquitination at Lys-14 and Lys-16 (H2AK13Ub and H2AK15Ub, respectively) in response to DNA damage is initiated by RNF168 that mediates monoubiquitination at these 2 sites, and 'Lys-63'-linked ubiquitin are then conjugated to monoubiquitin; RNF8 is able to extend 'Lys-63'-linked ubiquitin chains in vitro. H2AK119Ub and ionizing radiation-induced 'Lys-63'-linked ubiquitination (H2AK13Ub and H2AK15Ub) are distinct events. In terms of processing, acetylation at Lys-6 (H2AXK5ac) by KAT5 component of the NuA4 histone acetyltransferase complex promotes NBN/NBS1 assembly at the sites of DNA damage. Acetylation at Lys-37 increases in S and G2 phases. This modification has been proposed to play a role in DNA double-strand break repair.

The protein resides in the nucleus. It is found in the chromosome. Functionally, variant histone H2A which replaces conventional H2A in a subset of nucleosomes. Nucleosomes wrap and compact DNA into chromatin, limiting DNA accessibility to the cellular machineries which require DNA as a template. Histones thereby play a central role in transcription regulation, DNA repair, DNA replication and chromosomal stability. DNA accessibility is regulated via a complex set of post-translational modifications of histones, also called histone code, and nucleosome remodeling. Required for checkpoint-mediated arrest of cell cycle progression in response to low doses of ionizing radiation and for efficient repair of DNA double strand breaks (DSBs) specifically when modified by C-terminal phosphorylation. The chain is Histone H2AX from Homo sapiens (Human).